The following is a 76-amino-acid chain: Acyl carrier protein (76 aa).

The Carrier domain maps to Lys-2–Asn-76. Ser-37 is subject to O-(pantetheine 4'-phosphoryl)serine.

It belongs to the acyl carrier protein (ACP) family. 4'-phosphopantetheine is transferred from CoA to a specific serine of apo-ACP by AcpS. This modification is essential for activity because fatty acids are bound in thioester linkage to the sulfhydryl of the prosthetic group.

The protein resides in the plastid. The protein localises to the chloroplast. The protein operates within lipid metabolism; fatty acid biosynthesis. Its function is as follows. Carrier of the growing fatty acid chain in fatty acid biosynthesis. In Phaeodactylum tricornutum (strain CCAP 1055/1), this protein is Acyl carrier protein.